The chain runs to 277 residues: Large ribosomal subunit protein uL2 (277 aa).

2 disordered regions span residues 1–58 and 223–277; these read MGIR…GGGH and GVVM…GKKR. Basic and acidic residues predominate over residues 23-33; sequence EITRSEPEKSL. Positions 37–58 are enriched in basic residues; that stretch reads LHGRGGRNAHGKITTRHKGGGH. A compositionally biased stretch (basic and acidic residues) spans 251–267; it reads GKPEGRTRRNKPSDKLI. Positions 268–277 are enriched in basic residues; that stretch reads VRRRRTGKKR.

It belongs to the universal ribosomal protein uL2 family. Part of the 50S ribosomal subunit. Forms a bridge to the 30S subunit in the 70S ribosome.

One of the primary rRNA binding proteins. Required for association of the 30S and 50S subunits to form the 70S ribosome, for tRNA binding and peptide bond formation. It has been suggested to have peptidyltransferase activity; this is somewhat controversial. Makes several contacts with the 16S rRNA in the 70S ribosome. The chain is Large ribosomal subunit protein uL2 from Saccharopolyspora erythraea (strain ATCC 11635 / DSM 40517 / JCM 4748 / NBRC 13426 / NCIMB 8594 / NRRL 2338).